Reading from the N-terminus, the 123-residue chain is Ribosome-binding factor A (123 aa).

It belongs to the RbfA family. In terms of assembly, monomer. Binds 30S ribosomal subunits, but not 50S ribosomal subunits or 70S ribosomes.

The protein resides in the cytoplasm. In terms of biological role, one of several proteins that assist in the late maturation steps of the functional core of the 30S ribosomal subunit. Associates with free 30S ribosomal subunits (but not with 30S subunits that are part of 70S ribosomes or polysomes). Required for efficient processing of 16S rRNA. May interact with the 5'-terminal helix region of 16S rRNA. The sequence is that of Ribosome-binding factor A from Neisseria gonorrhoeae (strain ATCC 700825 / FA 1090).